The sequence spans 155 residues: Cyanate hydratase (155 aa).

Residues Arg-95, Glu-98, and Ser-121 contribute to the active site.

It belongs to the cyanase family.

The catalysed reaction is cyanate + hydrogencarbonate + 3 H(+) = NH4(+) + 2 CO2. Functionally, catalyzes the reaction of cyanate with bicarbonate to produce ammonia and carbon dioxide. This Pseudomonas syringae pv. tomato (strain ATCC BAA-871 / DC3000) protein is Cyanate hydratase.